The primary structure comprises 296 residues: Putative ankyrin repeat protein FPV216 (296 aa).

ANK repeat units follow at residues 73–102 (SYVN…DVNT) and 107–136 (LVIT…NINI).

The sequence is that of Putative ankyrin repeat protein FPV216 from Fowlpox virus (strain NVSL) (FPV).